Here is a 342-residue protein sequence, read N- to C-terminus: tRNA N6-adenosine threonylcarbamoyltransferase (342 aa).

Fe cation is bound by residues H111 and H115. Substrate-binding positions include 133-137, D166, G179, D183, and N273; that span reads AVSGG. D301 is a binding site for Fe cation.

Belongs to the KAE1 / TsaD family. Fe(2+) is required as a cofactor.

It is found in the cytoplasm. The enzyme catalyses L-threonylcarbamoyladenylate + adenosine(37) in tRNA = N(6)-L-threonylcarbamoyladenosine(37) in tRNA + AMP + H(+). Functionally, required for the formation of a threonylcarbamoyl group on adenosine at position 37 (t(6)A37) in tRNAs that read codons beginning with adenine. Is involved in the transfer of the threonylcarbamoyl moiety of threonylcarbamoyl-AMP (TC-AMP) to the N6 group of A37, together with TsaE and TsaB. TsaD likely plays a direct catalytic role in this reaction. In Syntrophotalea carbinolica (strain DSM 2380 / NBRC 103641 / GraBd1) (Pelobacter carbinolicus), this protein is tRNA N6-adenosine threonylcarbamoyltransferase.